A 514-amino-acid chain; its full sequence is MSKDNKKAGIEPKVFFPPLIIVGILCWLTVRDLDASNEVINAVFSYVTNVWGWAFEWYMVIMFGGWFWLVFGRYAKKRLGDEKPEFSTASWIFMMFASCTSAAVLFWGSIEIYYYISSPPFGMEGYSAPAKEIGLAYSLFHWGPLPWATYSFLSVAFAYFFFVRKMEVIRPSSTLTPLVGEKHVNGLFGTVVDNFYLVALILAMGTSLGLATPLVTECIQYLFGIPHTLQLDAIIISCWILLNAICVAFGLQKGVKIASDVRTYLSFLMLGWVFIVGGASFIVNYFTDSVGTLLMYMPRMLFYTDPIGKGGFPQAWTVFYWAWWVIYAIQMSIFLARISKGRTVRELCLGMVSGLTAGTWLIWTILGGNTLQLIDQNILNIPQLIDQYGVPRAIIETWAALPLSTATMWGFFILCFIATVTLINACSYTLAMSTCRSMKEGAEPPLLVRIGWSVLVGIIGIILLALGGLKPIQTAIIAGGCPLFFVNIMVTLSFIKDAKVHWKDCSPYTQKMTH.

Over 1 to 11 (MSKDNKKAGIE) the chain is Cytoplasmic. A helical transmembrane segment spans residues 12–30 (PKVFFPPLIIVGILCWLTV). At 31–42 (RDLDASNEVINA) the chain is on the periplasmic side. A helical membrane pass occupies residues 43–68 (VFSYVTNVWGWAFEWYMVIMFGGWFW). Residues 69–91 (LVFGRYAKKRLGDEKPEFSTASW) are Cytoplasmic-facing. Residues 92 to 112 (IFMMFASCTSAAVLFWGSIEI) form a helical membrane-spanning segment. The Periplasmic segment spans residues 113-131 (YYYISSPPFGMEGYSAPAK). Residues 132–154 (EIGLAYSLFHWGPLPWATYSFLS) form a helical membrane-spanning segment. Topologically, residues 155-185 (VAFAYFFFVRKMEVIRPSSTLTPLVGEKHVN) are cytoplasmic. Residues 186-216 (GLFGTVVDNFYLVALILAMGTSLGLATPLVT) form a helical membrane-spanning segment. Residues 217–230 (ECIQYLFGIPHTLQ) are Periplasmic-facing. The chain crosses the membrane as a helical span at residues 231-249 (LDAIIISCWILLNAICVAF). Residues 250–251 (GL) lie on the Cytoplasmic side of the membrane. Residues 252–277 (QKGVKIASDVRTYLSFLMLGWVFIVG) traverse the membrane as a helical segment. Residues 278 to 311 (GASFIVNYFTDSVGTLLMYMPRMLFYTDPIGKGG) lie on the Periplasmic side of the membrane. The chain crosses the membrane as a helical span at residues 312 to 335 (FPQAWTVFYWAWWVIYAIQMSIFL). Residues 336–347 (ARISKGRTVREL) are Cytoplasmic-facing. The chain crosses the membrane as a helical span at residues 348-369 (CLGMVSGLTAGTWLIWTILGGN). Residues 370-404 (TLQLIDQNILNIPQLIDQYGVPRAIIETWAALPLS) lie on the Periplasmic side of the membrane. The chain crosses the membrane as a helical span at residues 405-434 (TATMWGFFILCFIATVTLINACSYTLAMST). Topologically, residues 435–445 (CRSMKEGAEPP) are cytoplasmic. Residues 446–464 (LLVRIGWSVLVGIIGIILL) traverse the membrane as a helical segment. Topologically, residues 465-468 (ALGG) are periplasmic. Residues 469 to 492 (LKPIQTAIIAGGCPLFFVNIMVTL) traverse the membrane as a helical segment. Over 493–514 (SFIKDAKVHWKDCSPYTQKMTH) the chain is Cytoplasmic.

The protein belongs to the BCCT transporter (TC 2.A.15) family. CaiT subfamily. Homotrimer.

The protein localises to the cell inner membrane. The enzyme catalyses 4-(trimethylamino)butanoate(in) + (R)-carnitine(out) = 4-(trimethylamino)butanoate(out) + (R)-carnitine(in). It participates in amine and polyamine metabolism; carnitine metabolism. Catalyzes the exchange of L-carnitine for gamma-butyrobetaine. In Proteus mirabilis (strain HI4320), this protein is L-carnitine/gamma-butyrobetaine antiporter.